Here is a 254-residue protein sequence, read N- to C-terminus: RNA polymerase sigma factor SigI8 (254 aa).

The Polymerase core binding motif lies at 61-74 (DEYSIALIAFNEAI). Residues 209 to 228 (YKELTERFNLCRRTLEKNRK) constitute a DNA-binding region (H-T-H motif).

Belongs to the sigma-70 factor family. SigI subfamily. In terms of assembly, interacts with RsgI8.

It is found in the cytoplasm. Negatively regulated by the anti-sigma-I factor RsgI8. In terms of biological role, sigma factors are initiation factors that promote the attachment of RNA polymerase to specific initiation sites and are then released. The sequence is that of RNA polymerase sigma factor SigI8 from Acetivibrio thermocellus (strain ATCC 27405 / DSM 1237 / JCM 9322 / NBRC 103400 / NCIMB 10682 / NRRL B-4536 / VPI 7372) (Clostridium thermocellum).